The chain runs to 110 residues: Class I hydrophobin Po.HYD (110 aa).

An N-terminal signal peptide occupies residues 1 to 27 (MFSKATLFFTTVSRYRDTQAPIPTGQT). 4 cysteine pairs are disulfide-bonded: cysteine 35-cysteine 91, cysteine 42-cysteine 85, cysteine 43-cysteine 75, and cysteine 92-cysteine 105.

The protein belongs to the fungal hydrophobin family. Self-assembles to form functional amyloid fibrils called rodlets. Self-assembly into fibrillar rodlets occurs spontaneously at hydrophobic:hydrophilic interfaces and the rodlets further associate laterally to form amphipathic monolayers.

The protein localises to the secreted. Its subcellular location is the cell wall. Functionally, aerial growth, conidiation, and dispersal of filamentous fungi in the environment rely upon a capability of their secreting small amphipathic proteins called hydrophobins (HPBs) with low sequence identity. Class I can self-assemble into an outermost layer of rodlet bundles on aerial cell surfaces, conferring cellular hydrophobicity that supports fungal growth, development and dispersal; whereas Class II form highly ordered films at water-air interfaces through intermolecular interactions but contribute nothing to the rodlet structure. This Pleurotus ostreatus (Oyster mushroom) protein is Class I hydrophobin Po.HYD.